Consider the following 154-residue polypeptide: Egg-lysin (154 aa).

Positions 1–18 (MKLLVLCIFAMMATLAMS) are cleaved as a signal peptide.

Homodimer. In terms of tissue distribution, sperm.

In terms of biological role, dissolves the egg vitelline layer nonenzymatically during fertilization. It creates a hole of about 3 mu-m in diameter through which the sperm pass. This is Egg-lysin from Haliotis sorenseni (White abalone).